The sequence spans 305 residues: Putative ankyrin repeat protein RF_0580 (305 aa).

ANK repeat units follow at residues 5-34, 39-68, 72-101, 107-136, 140-169, 173-202, and 206-235; these read YNKN…NIDE, RGET…SPNI, SGQT…NIDL, CGHS…DINS, FGAS…DVNA, YEDT…DVNI, and NNFT…TIKI.

In Rickettsia felis (strain ATCC VR-1525 / URRWXCal2) (Rickettsia azadi), this protein is Putative ankyrin repeat protein RF_0580.